Consider the following 230-residue polypeptide: Ribonuclease 3 (230 aa).

The RNase III domain maps to 5–127; it reads HEHLARKLGI…ILGAVLRDQG (123 aa). Mg(2+) is bound at residue Glu-40. Asp-44 is an active-site residue. Mg(2+) is bound by residues Asp-113 and Glu-116. Residue Glu-116 is part of the active site. Positions 154 to 224 constitute a DRBM domain; the sequence is DPKTRLQELM…AENMLSRLSD (71 aa). Residues 202–230 form a disordered region; sequence GEGSSRKKAEQQAAENMLSRLSDQSRFRV.

It belongs to the ribonuclease III family. In terms of assembly, homodimer. It depends on Mg(2+) as a cofactor.

The protein localises to the cytoplasm. It carries out the reaction Endonucleolytic cleavage to 5'-phosphomonoester.. Its function is as follows. Digests double-stranded RNA. Involved in the processing of primary rRNA transcript to yield the immediate precursors to the large and small rRNAs (23S and 16S). Processes some mRNAs, and tRNAs when they are encoded in the rRNA operon. Processes pre-crRNA and tracrRNA of type II CRISPR loci if present in the organism. The polypeptide is Ribonuclease 3 (Methylococcus capsulatus (strain ATCC 33009 / NCIMB 11132 / Bath)).